The primary structure comprises 504 residues: MEKFQGYLEFDGARQQSFLYPLFFREYIYVLAYDHGLNRLNKNRSIFLENTDYDKKYSSLIVKRLILRMYEQNRLIIPTKDLNQNSFLGHTSLFYYQMISVLFAVIVEIPFSLRLGSPFQGKQVKKSYNLQSIHSIFPFLEDKLAHFNYVLDVLIPYPIHLEILVQTLRYRVKDASSLHFFRFCLYEYCNWKNFYKKKKSILNPRFFLFLYNSHVCEYESIFFFLRKRSSHLRSTSYEVLFERILFYGKIQYFLKVFVNNFPAILGLLKDPFIHYVRYHGRCVLATKDTPLLMNKWKYYFVNLWQCYFSVWFQSQKVNINQLSKDNLEFLGYLSSLRLNPLVVRSQMLENSFLIDNVRIKLDSKIPISSIIGSLAKDKFCNVLGHPISKATWTDSSDSDILNRFVRICRNISHYYSGSSKKKNLYRIKYILRLCCVKTLARKHKSTVRAFLKRLGSGLLEEFLTGEDQVLSLIFPRSYYAAKRLYRVRIWYLDILYLNDLVNHE.

Belongs to the intron maturase 2 family. MatK subfamily.

The protein resides in the plastid. It is found in the chloroplast. Functionally, usually encoded in the trnK tRNA gene intron. Probably assists in splicing its own and other chloroplast group II introns. The polypeptide is Maturase K (Olimarabidopsis pumila (Dwarf rocket)).